A 437-amino-acid chain; its full sequence is CMP-5'-(3-aminopropyl)phosphonate hydroxylase (437 aa).

The cofactor is FAD.

It carries out the reaction CMP-5'-(3-aminopropyl)phosphonate + NADPH + O2 = CMP-5'-(N-hydroxy-3-aminopropyl)phosphonate + NADP(+) + H2O. It participates in antibiotic biosynthesis. Hydroxylase involved in the biosynthesis of the phosphonate antibiotic FR-900098, a potent antimalarial agent that acts as an inhibitor of 1-deoxy-D-xylulose 5-phosphate reductoisomerase (DXR), the first enzyme in the nonmevalonate pathway for isoprenoid biosynthesis. Catalyzes the N-hydroxylation of CMP-5'-3-aminopropylphosphonate (CMP-5'-3APn) to CMP-5'-(N-hydroxy-3-aminopropyl)phosphonate (CMP-5'-H3APn). Cannot use CMP-5'-N-acetyl-3-aminopropylphosphonate (CMP-5'-Ac3APn) as a substrate. The protein is CMP-5'-(3-aminopropyl)phosphonate hydroxylase of Streptomyces rubellomurinus (strain ATCC 31215).